The following is a 577-amino-acid chain: Outer spore wall assembly protein SHE10 (577 aa).

Positions 1-23 are cleaved as a signal peptide; that stretch reads MGKLIKLITTLTVLVSLLQYCCE. 2 coiled-coil regions span residues 379–416 and 513–561; these read NETR…ENVE and ILRS…EEDV. Basic and acidic residues predominate over residues 525–545; it reads RERKERERKEREKAAAEEFQR. Residues 525 to 577 form a disordered region; the sequence is RERKERERKEREKAAAEEFQRQQELLRQQEEEDEEDVSYTSTSTITTTTTMTL. A compositionally biased stretch (low complexity) spans 562–577; it reads SYTSTSTITTTTTMTL.

Belongs to the SHE10 family. As to quaternary structure, component of the mitochondria-localized RNase mitochondrial RNA-processing (RNase MRP) composed of one single RNA encoded by the NME1 gene and at least 31 proteins. Absent in the nucleus-localized RNase MRP (NuMRP).

The protein resides in the mitochondrion. In terms of biological role, involved in spore wall assembly. May be a component of the mitochondrial RNase MRP (MtMRP), a ribonucleoprotein endoribonuclease involved in the cleaving RNA transcripts to generate primers for DNA replication in mitochondria. The protein is Outer spore wall assembly protein SHE10 of Saccharomyces cerevisiae (strain Lalvin EC1118 / Prise de mousse) (Baker's yeast).